Here is a 393-residue protein sequence, read N- to C-terminus: NAD(P)H-quinone oxidoreductase subunit H, chloroplastic (393 aa).

This sequence belongs to the complex I 49 kDa subunit family. In terms of assembly, NDH is composed of at least 16 different subunits, 5 of which are encoded in the nucleus.

The protein localises to the plastid. The protein resides in the chloroplast thylakoid membrane. The enzyme catalyses a plastoquinone + NADH + (n+1) H(+)(in) = a plastoquinol + NAD(+) + n H(+)(out). It catalyses the reaction a plastoquinone + NADPH + (n+1) H(+)(in) = a plastoquinol + NADP(+) + n H(+)(out). NDH shuttles electrons from NAD(P)H:plastoquinone, via FMN and iron-sulfur (Fe-S) centers, to quinones in the photosynthetic chain and possibly in a chloroplast respiratory chain. The immediate electron acceptor for the enzyme in this species is believed to be plastoquinone. Couples the redox reaction to proton translocation, and thus conserves the redox energy in a proton gradient. The protein is NAD(P)H-quinone oxidoreductase subunit H, chloroplastic of Agrostis stolonifera (Creeping bentgrass).